A 124-amino-acid polypeptide reads, in one-letter code: Small ribosomal subunit protein bS6 (124 aa).

Belongs to the bacterial ribosomal protein bS6 family.

In terms of biological role, binds together with bS18 to 16S ribosomal RNA. The chain is Small ribosomal subunit protein bS6 from Rippkaea orientalis (strain PCC 8801 / RF-1) (Cyanothece sp. (strain PCC 8801)).